The chain runs to 379 residues: tRNA-specific 2-thiouridylase MnmA (379 aa).

Residues 23 to 30 and Leu-49 contribute to the ATP site; that span reads AMSGGVDS. Residue Cys-117 is the Nucleophile of the active site. Cys-117 and Cys-214 are joined by a disulfide. Gly-141 contacts ATP. Residues 163–165 are interaction with tRNA; the sequence is RDQ. Cys-214 serves as the catalytic Cysteine persulfide intermediate.

Belongs to the MnmA/TRMU family.

It is found in the cytoplasm. The enzyme catalyses S-sulfanyl-L-cysteinyl-[protein] + uridine(34) in tRNA + AH2 + ATP = 2-thiouridine(34) in tRNA + L-cysteinyl-[protein] + A + AMP + diphosphate + H(+). Its function is as follows. Catalyzes the 2-thiolation of uridine at the wobble position (U34) of tRNA, leading to the formation of s(2)U34. The protein is tRNA-specific 2-thiouridylase MnmA of Cereibacter sphaeroides (strain ATCC 17029 / ATH 2.4.9) (Rhodobacter sphaeroides).